A 252-amino-acid chain; its full sequence is MNPAIDLNCDMGESYGAWRMGNDEAVLQFVTSANIACGFHGGDPSTMRQTVAAALAHGVALGAHPSLPDLAGFGRRAMQITPQEAYDLVVYQVGALAGVAASQGARLHHVKAHGALYNMAAKDAALARAICQAVRDVDSDLVLYGLAGSALIDAARAIGLRAAQEVFADRTYQADGQLTPRSQPDAMITDLDQAIAQVLGMVRDGSVRTPDGQTVALQADTLCIHGDQPDALVFARGIRLALERDGIAIQAA.

This sequence belongs to the LamB/PxpA family. As to quaternary structure, forms a complex composed of PxpA, PxpB and PxpC.

It carries out the reaction 5-oxo-L-proline + ATP + 2 H2O = L-glutamate + ADP + phosphate + H(+). In terms of biological role, catalyzes the cleavage of 5-oxoproline to form L-glutamate coupled to the hydrolysis of ATP to ADP and inorganic phosphate. In Bordetella pertussis (strain Tohama I / ATCC BAA-589 / NCTC 13251), this protein is 5-oxoprolinase subunit A.